Here is a 310-residue protein sequence, read N- to C-terminus: GMP synthase [glutamine-hydrolyzing] subunit B (310 aa).

Residues 1–187 (MSFSDYISRI…LGLPTDIQPF (187 aa)) form the GMPS ATP-PPase domain. 27–33 (SGGQDSS) provides a ligand contact to ATP.

As to quaternary structure, heterodimer composed of a glutamine amidotransferase subunit (A) and a GMP-binding subunit (B).

It carries out the reaction XMP + L-glutamine + ATP + H2O = GMP + L-glutamate + AMP + diphosphate + 2 H(+). Its pathway is purine metabolism; GMP biosynthesis; GMP from XMP (L-Gln route): step 1/1. Functionally, catalyzes the synthesis of GMP from XMP. This is GMP synthase [glutamine-hydrolyzing] subunit B (guaAB) from Thermoplasma volcanium (strain ATCC 51530 / DSM 4299 / JCM 9571 / NBRC 15438 / GSS1).